The sequence spans 58 residues: UPF0391 membrane protein Sbal195_1447 (58 aa).

2 consecutive transmembrane segments (helical) span residues 6 to 26 (LVFL…IAGA) and 28 to 48 (AGIA…SLLV).

The protein belongs to the UPF0391 family.

Its subcellular location is the cell membrane. The chain is UPF0391 membrane protein Sbal195_1447 from Shewanella baltica (strain OS195).